Consider the following 340-residue polypeptide: Glutamyl-tRNA reductase (340 aa).

Residues 49–52 (TCNR), S108, 113–115 (ETE), and Q119 each bind substrate. Catalysis depends on C50, which acts as the Nucleophile. 188–193 (GAGEMS) is an NADP(+) binding site.

It belongs to the glutamyl-tRNA reductase family. As to quaternary structure, homodimer.

It catalyses the reaction (S)-4-amino-5-oxopentanoate + tRNA(Glu) + NADP(+) = L-glutamyl-tRNA(Glu) + NADPH + H(+). Its pathway is porphyrin-containing compound metabolism; protoporphyrin-IX biosynthesis; 5-aminolevulinate from L-glutamyl-tRNA(Glu): step 1/2. Its function is as follows. Catalyzes the NADPH-dependent reduction of glutamyl-tRNA(Glu) to glutamate 1-semialdehyde (GSA). The sequence is that of Glutamyl-tRNA reductase from Akkermansia muciniphila (strain ATCC BAA-835 / DSM 22959 / JCM 33894 / BCRC 81048 / CCUG 64013 / CIP 107961 / Muc).